The primary structure comprises 877 residues: Alpha-glucosidase (877 aa).

The N-terminal stretch at 1 to 23 (MATVGVLLLCLCLCLFAPRLCSS) is a signal peptide. Residues 89-115 (VPQDIIPRPAPGDVLHDAPPASSAPLQ) form a disordered region. Asn191, Asn298, Asn338, and Asn391 each carry an N-linked (GlcNAc...) asparagine glycan. Residues Asp437 and Glu440 contribute to the active site. Residue Asn471 is glycosylated (N-linked (GlcNAc...) asparagine). Asp534 serves as the catalytic Proton donor. An N-linked (GlcNAc...) asparagine glycan is attached at Asn570.

Belongs to the glycosyl hydrolase 31 family. High levels seen in the aleurone and scutellum after germination, while low levels are found in developing seeds.

The catalysed reaction is Hydrolysis of terminal, non-reducing (1-&gt;4)-linked alpha-D-glucose residues with release of alpha-D-glucose.. This chain is Alpha-glucosidase, found in Hordeum vulgare (Barley).